A 101-amino-acid chain; its full sequence is DNA-directed RNA polymerase subunit beta (101 aa).

The segment at 74–101 is disordered; it reads KRRLSALGPGGLSRERAGLEVRDVHSSH. Residues 86–101 show a composition bias toward basic and acidic residues; that stretch reads SRERAGLEVRDVHSSH.

The protein belongs to the RNA polymerase beta chain family. The RNAP catalytic core consists of 2 alpha, 1 beta, 1 beta' and 1 omega subunit. When a sigma factor is associated with the core the holoenzyme is formed, which can initiate transcription.

The catalysed reaction is RNA(n) + a ribonucleoside 5'-triphosphate = RNA(n+1) + diphosphate. Functionally, DNA-dependent RNA polymerase catalyzes the transcription of DNA into RNA using the four ribonucleoside triphosphates as substrates. The chain is DNA-directed RNA polymerase subunit beta (rpoB) from Mycolicibacterium peregrinum (Mycobacterium peregrinum).